Here is a 36-residue protein sequence, read N- to C-terminus: HSEGTFSNDYSKYLEDRKAQDFVRWLMNNKRSGAAE.

It belongs to the glucagon family.

The protein resides in the secreted. Its function is as follows. Promotes hydrolysis of glycogen and lipids, and raises the blood sugar level. The protein is Glucagon-1 (gcg1) of Oreochromis niloticus (Nile tilapia).